A 330-amino-acid chain; its full sequence is Probable ADP,ATP carrier protein At5g56450 (330 aa).

A compositionally biased stretch (acidic residues) spans 1–10 (MCISKEDEED). The disordered stretch occupies residues 1–22 (MCISKEDEEDPSRNRRNQSPLS). Helical transmembrane passes span 27–61 (LKHFQKDLLAGAVMGGVVHTIVAPIERAKLLLQTQ), 103–127 (GSSVLRYYPSVALNFSLKDLYRSIL), 137–171 (IFSGALANFMAGSAAGCTALIVVYPLDIAHTRLAA), 203–230 (GLPASLHGVIIHRGLYFGGFDTVKEIFS), 236–270 (ELALWKRWGLAQAVTTSAGLASYPLDTVRRRIMMQ), and 300–325 (GALSNMFRSTGSAAILVFYDEVKRFL). 3 Solcar repeats span residues 28-126 (KHFQ…YRSI), 139-228 (SGAL…VKEI), and 241-324 (KRWG…VKRF). ADP contacts are provided by R108 and K120. R264 is an ADP binding site. The Substrate recognition signature appears at 264-269 (RRRIMM).

This sequence belongs to the mitochondrial carrier (TC 2.A.29) family. In terms of assembly, monomer.

It is found in the membrane. It catalyses the reaction ADP(in) + ATP(out) = ADP(out) + ATP(in). ADP:ATP antiporter that catalyzes the exchange of ADP and ATP across the membrane. The chain is Probable ADP,ATP carrier protein At5g56450 from Arabidopsis thaliana (Mouse-ear cress).